The chain runs to 427 residues: Enolase (427 aa).

Residue Gln-163 coordinates (2R)-2-phosphoglycerate. The active-site Proton donor is Glu-205. Mg(2+)-binding residues include Asp-242, Glu-285, and Asp-312. 4 residues coordinate (2R)-2-phosphoglycerate: Lys-337, Arg-366, Ser-367, and Lys-388. The Proton acceptor role is filled by Lys-337.

Belongs to the enolase family. The cofactor is Mg(2+).

The protein localises to the cytoplasm. Its subcellular location is the secreted. The protein resides in the cell surface. The catalysed reaction is (2R)-2-phosphoglycerate = phosphoenolpyruvate + H2O. The protein operates within carbohydrate degradation; glycolysis; pyruvate from D-glyceraldehyde 3-phosphate: step 4/5. Catalyzes the reversible conversion of 2-phosphoglycerate (2-PG) into phosphoenolpyruvate (PEP). It is essential for the degradation of carbohydrates via glycolysis. The protein is Enolase of Burkholderia mallei (strain NCTC 10247).